We begin with the raw amino-acid sequence, 260 residues long: Thaumatin-like protein 1 (260 aa).

Residues 1-32 form the signal peptide; it reads MIITVLHSHVSFYFIILSFLFFHALHLVGSDG. 8 cysteine pairs are disulfide-bonded: Cys-41/Cys-255, Cys-89/Cys-100, Cys-105/Cys-112, Cys-166/Cys-245, Cys-171/Cys-228, Cys-179/Cys-191, Cys-195/Cys-204, and Cys-205/Cys-215.

The protein belongs to the thaumatin family. In terms of tissue distribution, expressed only in roots.

Functionally, involved in local responses of roots to colonization by non-pathogenic plant growth-promoting rhizobacteria (PGPR) fluorescent Pseudomonas spp., but seems to not being required for the establishment of subsequent induced systemic resistance (ISR). This chain is Thaumatin-like protein 1, found in Arabidopsis thaliana (Mouse-ear cress).